A 798-amino-acid chain; its full sequence is Protocadherin beta-13 (798 aa).

The signal sequence occupies residues 1–28 (MEASGKLICRQRQVLFSFLLLGLSLAGA). Residues 29-690 (AEPRSYSVVE…AQADLLTVYL (662 aa)) are Extracellular-facing. 5 consecutive Cadherin domains span residues 36 to 134 (VVEE…SPVF), 139 to 243 (MLVK…APEF), 248 to 348 (YRVQ…APEV), 353 to 451 (FTSP…APAF), and 456 to 561 (YTLF…SPFV). 2 N-linked (GlcNAc...) asparagine glycosylation sites follow: N418 and N436. The N-linked (GlcNAc...) asparagine glycan is linked to N567. Positions 568-671 (GSAPCTELVP…LVDGFSQPYL (104 aa)) constitute a Cadherin 6 domain. The helical transmembrane segment at 691–711 (VVALASVSSLFLFSVLLFVAV) threads the bilayer. Over 712-798 (RLCRRSRAAS…FPNNFGFNIQ (87 aa)) the chain is Cytoplasmic.

The protein resides in the cell membrane. Functionally, potential calcium-dependent cell-adhesion protein. May be involved in the establishment and maintenance of specific neuronal connections in the brain. The polypeptide is Protocadherin beta-13 (PCDHB13) (Homo sapiens (Human)).